A 356-amino-acid chain; its full sequence is Histidinol-phosphate aminotransferase (356 aa).

The residue at position 214 (Lys214) is an N6-(pyridoxal phosphate)lysine.

It belongs to the class-II pyridoxal-phosphate-dependent aminotransferase family. Histidinol-phosphate aminotransferase subfamily. As to quaternary structure, homodimer. Requires pyridoxal 5'-phosphate as cofactor.

It carries out the reaction L-histidinol phosphate + 2-oxoglutarate = 3-(imidazol-4-yl)-2-oxopropyl phosphate + L-glutamate. It functions in the pathway amino-acid biosynthesis; L-histidine biosynthesis; L-histidine from 5-phospho-alpha-D-ribose 1-diphosphate: step 7/9. This is Histidinol-phosphate aminotransferase from Escherichia coli O127:H6 (strain E2348/69 / EPEC).